The primary structure comprises 511 residues: Putative polyol transporter 2 (511 aa).

Helical transmembrane passes span 25–45 (FAFACAILASMTSIILGYDIG), 63–83 (VQLEILMGILNIYSLIGSGAA), 94–114 (YTIVLAGFFFFCGALLMGFAT), 117–137 (PFIMVGRFVAGIGVGYAMMIA), 156–176 (FPEIFINIGILLGYVSNYFFA), 186–206 (FMLGIGAVPSVFLAIGVLAMP), 284–304 (ILIACLGIHFSQQASGIDAVV), 324–344 (LATVAVGVVKTLFIVVGTCLV), 351–371 (ALLLTSMGGMFFSLTALGTSL), 384–404 (WAIGLAVTTVMTFVATFSLGA), 424–444 (GASLGVMLNRLMSGIIGMTFL), and 454–474 (GAFLLFAGVAVAAWVFFFTFL).

The protein belongs to the major facilitator superfamily. Sugar transporter (TC 2.A.1.1) family.

It localises to the membrane. Functionally, plasma membrane sugar-proton symporter. This is Putative polyol transporter 2 (PLT2) from Arabidopsis thaliana (Mouse-ear cress).